The chain runs to 144 residues: Monooxygenase ptaG (144 aa).

The protein belongs to the avfA family.

It participates in secondary metabolite biosynthesis. In terms of biological role, monooxygenase; part of the gene cluster that mediates the biosynthesis of pestheic acid, a diphenyl ether which is a biosynthetic precursor of the unique chloropupukeananes. The biosynthesis initiates from condensation of acetate and malonate units catalyzed by the non-reducing PKS ptaA. As the ptaA protein is TE/CLC domain-deficient, hydrolysis and Claisen cyclization of the polyketide could be catalyzed by ptaB containing a beta-lactamase domain. The ptaB protein might hydrolyze the thioester bond between the ACP of ptaA and the intermediate to release atrochrysone carboxylic acid, which is spontaneously dehydrated to form endocrocin anthrone. Endocrocin anthrone is then converted to endocrocin, catalyzed by the anthrone oxygenase ptaC. Spontaneous decarboxylation of endocrocin occurs to generate emodin. An O-methyltransferase (ptaH or ptaI) could methylate emodin to form physcion. PtaJ could then catalyze the oxidative cleavage of physcion, and rotation of the intermediate could then afford desmethylisosulochrin. PtaF, a putative NADH-dependent oxidoreductase, might also participate in the oxidative cleavage step. Desmethylisosulochrin is then transformed by another O-methyltransferase (ptaH or ptaI) to form isosulochrin. Chlorination of isosulochrin by ptaM in the cyclohexadienone B ring then produces chloroisosulochrin. PtaE is responsible for the oxidative coupling reactions of both benzophenones isosulochrin and chloroisosulochrin to RES-1214-1 and pestheic acid respectively, regardless of chlorination. This chain is Monooxygenase ptaG, found in Pestalotiopsis fici (strain W106-1 / CGMCC3.15140).